A 379-amino-acid polypeptide reads, in one-letter code: Flap endonuclease 1 (379 aa).

The interval 1–105 is N-domain; the sequence is MGVKGLNQLI…GELEKRLLRR (105 aa). Mg(2+) is bound at residue aspartate 34. Positions 47 and 71 each coordinate DNA. Positions 87, 159, 161, 180, and 182 each coordinate Mg(2+). The segment at 123 to 254 is I-domain; that stretch reads DMVRYEKRTV…VTAFKLIKEH (132 aa). Glutamate 159 provides a ligand contact to DNA. DNA is bound by residues glycine 232 and aspartate 234. A Mg(2+)-binding site is contributed by aspartate 234. An interaction with PCNA region spans residues 341-349; it reads VQGRLDGFF. The tract at residues 344-379 is disordered; the sequence is RLDGFFQSVPKPKDSADKKRKNDTKSAKSKKAKTRK. The span at 361–379 shows a compositional bias: basic residues; that stretch reads KKRKNDTKSAKSKKAKTRK.

Belongs to the XPG/RAD2 endonuclease family. FEN1 subfamily. Interacts with PCNA. Three molecules of FEN1 bind to one PCNA trimer with each molecule binding to one PCNA monomer. PCNA stimulates the nuclease activity without altering cleavage specificity. Requires Mg(2+) as cofactor. Phosphorylated. Phosphorylation upon DNA damage induces relocalization to the nuclear plasma.

The protein resides in the nucleus. The protein localises to the nucleolus. It localises to the nucleoplasm. Its subcellular location is the mitochondrion. Its function is as follows. Structure-specific nuclease with 5'-flap endonuclease and 5'-3' exonuclease activities involved in DNA replication and repair. During DNA replication, cleaves the 5'-overhanging flap structure that is generated by displacement synthesis when DNA polymerase encounters the 5'-end of a downstream Okazaki fragment. It enters the flap from the 5'-end and then tracks to cleave the flap base, leaving a nick for ligation. Also involved in the long patch base excision repair (LP-BER) pathway, by cleaving within the apurinic/apyrimidinic (AP) site-terminated flap. Acts as a genome stabilization factor that prevents flaps from equilibrating into structures that lead to duplications and deletions. Also possesses 5'-3' exonuclease activity on nicked or gapped double-stranded DNA, and exhibits RNase H activity. Also involved in replication and repair of rDNA and in repairing mitochondrial DNA. The polypeptide is Flap endonuclease 1 (Debaryomyces hansenii (strain ATCC 36239 / CBS 767 / BCRC 21394 / JCM 1990 / NBRC 0083 / IGC 2968) (Yeast)).